A 295-amino-acid polypeptide reads, in one-letter code: ATP synthase gamma chain (295 aa).

The protein belongs to the ATPase gamma chain family. F-type ATPases have 2 components, CF(1) - the catalytic core - and CF(0) - the membrane proton channel. CF(1) has five subunits: alpha(3), beta(3), gamma(1), delta(1), epsilon(1). CF(0) has three main subunits: a, b and c.

It localises to the cell inner membrane. Its function is as follows. Produces ATP from ADP in the presence of a proton gradient across the membrane. The gamma chain is believed to be important in regulating ATPase activity and the flow of protons through the CF(0) complex. This chain is ATP synthase gamma chain, found in Methylorubrum populi (strain ATCC BAA-705 / NCIMB 13946 / BJ001) (Methylobacterium populi).